Consider the following 152-residue polypeptide: Transcriptional regulator MraZ (152 aa).

2 consecutive SpoVT-AbrB domains span residues 5-52 (HSNR…PMPE) and 81-124 (ATEV…DQGR).

This sequence belongs to the MraZ family. Forms oligomers.

Its subcellular location is the cytoplasm. The protein resides in the nucleoid. The sequence is that of Transcriptional regulator MraZ from Solidesulfovibrio magneticus (strain ATCC 700980 / DSM 13731 / RS-1) (Desulfovibrio magneticus).